We begin with the raw amino-acid sequence, 197 residues long: Holliday junction branch migration complex subunit RuvA (197 aa).

The tract at residues 1–63 (MYAYLKGIIT…EDAHLLYGFR (63 aa)) is domain I. The segment at 64–142 (SEDEKKLFLS…VAGDDLPAKV (79 aa)) is domain II. Residues 143 to 147 (AVQAS) form a flexible linker region. Positions 148–197 (AENQELEEAMEAMLALGYKATELKKIKKFFEGTTDTAENYIKSALKMLVK) are domain III.

It belongs to the RuvA family. In terms of assembly, homotetramer. Forms an RuvA(8)-RuvB(12)-Holliday junction (HJ) complex. HJ DNA is sandwiched between 2 RuvA tetramers; dsDNA enters through RuvA and exits via RuvB. An RuvB hexamer assembles on each DNA strand where it exits the tetramer. Each RuvB hexamer is contacted by two RuvA subunits (via domain III) on 2 adjacent RuvB subunits; this complex drives branch migration. In the full resolvosome a probable DNA-RuvA(4)-RuvB(12)-RuvC(2) complex forms which resolves the HJ.

Its subcellular location is the cytoplasm. Functionally, the RuvA-RuvB-RuvC complex processes Holliday junction (HJ) DNA during genetic recombination and DNA repair, while the RuvA-RuvB complex plays an important role in the rescue of blocked DNA replication forks via replication fork reversal (RFR). RuvA specifically binds to HJ cruciform DNA, conferring on it an open structure. The RuvB hexamer acts as an ATP-dependent pump, pulling dsDNA into and through the RuvAB complex. HJ branch migration allows RuvC to scan DNA until it finds its consensus sequence, where it cleaves and resolves the cruciform DNA. This Streptococcus pneumoniae serotype 19F (strain G54) protein is Holliday junction branch migration complex subunit RuvA.